We begin with the raw amino-acid sequence, 390 residues long: MLFSKSLLLSVLASLSFAAPVEKREKTLTLDFDVKRISSKAKNVTVASSPGFRRNLRAASDAGVTISLENEYSFYLTTIEIGTPGQKLQVDVDTGSSDLWVPGQGTSSLYGTYDHTKSTSYKKDRSGFSISYGDGSSARGDWAQETVSIGGASITGLEFGDATSQDVGQGLLGIGLKGNEASAQSSNSFTYDNLPLKLKDQGLIDKAAYSLYLNSEDATSGSILFGGSDSSKYSGSLATLDLVNIDDEGDSTSGAVAFFVELEGIEAGSSSITKTTYPALLDSGTTLIYAPSSIASSIGREYGTYSYSYGGYVTSCDATGPDFKFSFNGKTITVPFSNLLFQNSEGDSECLVGVLSSGSNYYILGDAFLRSAYVYYDIDNSQVGIAQAKY.

Positions 1 to 18 (MLFSKSLLLSVLASLSFA) are cleaved as a signal peptide. The Peptidase A1 domain occupies 75 to 386 (YLTTIEIGTP…DIDNSQVGIA (312 aa)). Catalysis depends on residues Asp93 and Asp282.

The protein belongs to the peptidase A1 family.

The polypeptide is Acid protease (PEP1) (Saccharomycopsis fibuligera (Yeast)).